The following is a 209-amino-acid chain: Thiamine-phosphate synthase (209 aa).

4-amino-2-methyl-5-(diphosphooxymethyl)pyrimidine contacts are provided by residues 36 to 40 (QLRDK) and Asn-68. The Mg(2+) site is built by Asp-69 and Asp-88. Ser-107 lines the 4-amino-2-methyl-5-(diphosphooxymethyl)pyrimidine pocket. 133 to 135 (TNS) contributes to the 2-[(2R,5Z)-2-carboxy-4-methylthiazol-5(2H)-ylidene]ethyl phosphate binding site. Residue Lys-136 participates in 4-amino-2-methyl-5-(diphosphooxymethyl)pyrimidine binding. 2-[(2R,5Z)-2-carboxy-4-methylthiazol-5(2H)-ylidene]ethyl phosphate contacts are provided by residues Gly-164 and 184–185 (IT).

Belongs to the thiamine-phosphate synthase family. Mg(2+) serves as cofactor.

It catalyses the reaction 2-[(2R,5Z)-2-carboxy-4-methylthiazol-5(2H)-ylidene]ethyl phosphate + 4-amino-2-methyl-5-(diphosphooxymethyl)pyrimidine + 2 H(+) = thiamine phosphate + CO2 + diphosphate. The catalysed reaction is 2-(2-carboxy-4-methylthiazol-5-yl)ethyl phosphate + 4-amino-2-methyl-5-(diphosphooxymethyl)pyrimidine + 2 H(+) = thiamine phosphate + CO2 + diphosphate. It carries out the reaction 4-methyl-5-(2-phosphooxyethyl)-thiazole + 4-amino-2-methyl-5-(diphosphooxymethyl)pyrimidine + H(+) = thiamine phosphate + diphosphate. It participates in cofactor biosynthesis; thiamine diphosphate biosynthesis; thiamine phosphate from 4-amino-2-methyl-5-diphosphomethylpyrimidine and 4-methyl-5-(2-phosphoethyl)-thiazole: step 1/1. Condenses 4-methyl-5-(beta-hydroxyethyl)thiazole monophosphate (THZ-P) and 2-methyl-4-amino-5-hydroxymethyl pyrimidine pyrophosphate (HMP-PP) to form thiamine monophosphate (TMP). In Shouchella clausii (strain KSM-K16) (Alkalihalobacillus clausii), this protein is Thiamine-phosphate synthase.